The following is a 511-amino-acid chain: Bifunctional purine biosynthesis protein PurH (511 aa).

The MGS-like domain occupies 1–147 (MIQIKRALIS…KNYKHTLVLT (147 aa)).

Belongs to the PurH family.

It catalyses the reaction (6R)-10-formyltetrahydrofolate + 5-amino-1-(5-phospho-beta-D-ribosyl)imidazole-4-carboxamide = 5-formamido-1-(5-phospho-D-ribosyl)imidazole-4-carboxamide + (6S)-5,6,7,8-tetrahydrofolate. The enzyme catalyses IMP + H2O = 5-formamido-1-(5-phospho-D-ribosyl)imidazole-4-carboxamide. It functions in the pathway purine metabolism; IMP biosynthesis via de novo pathway; 5-formamido-1-(5-phospho-D-ribosyl)imidazole-4-carboxamide from 5-amino-1-(5-phospho-D-ribosyl)imidazole-4-carboxamide (10-formyl THF route): step 1/1. The protein operates within purine metabolism; IMP biosynthesis via de novo pathway; IMP from 5-formamido-1-(5-phospho-D-ribosyl)imidazole-4-carboxamide: step 1/1. The sequence is that of Bifunctional purine biosynthesis protein PurH from Leptospira borgpetersenii serovar Hardjo-bovis (strain JB197).